We begin with the raw amino-acid sequence, 438 residues long: Ornithine aminotransferase car2 (438 aa).

Lysine 275 carries the post-translational modification N6-(pyridoxal phosphate)lysine.

The protein belongs to the class-III pyridoxal-phosphate-dependent aminotransferase family. Requires pyridoxal 5'-phosphate as cofactor.

Its subcellular location is the cytoplasm. The protein resides in the nucleus. It catalyses the reaction a 2-oxocarboxylate + L-ornithine = L-glutamate 5-semialdehyde + an L-alpha-amino acid. It functions in the pathway amino-acid biosynthesis; L-proline biosynthesis; L-glutamate 5-semialdehyde from L-ornithine: step 1/1. In Schizosaccharomyces pombe (strain 972 / ATCC 24843) (Fission yeast), this protein is Ornithine aminotransferase car2 (car2).